Consider the following 243-residue polypeptide: Nuclear protein UL4 homolog (243 aa).

The segment at 193–226 (RPDDQTTPTPTPHQYTSQRRQPETNCPSPQPAFF) is disordered. The span at 205–219 (HQYTSQRRQPETNCP) shows a compositional bias: polar residues.

Belongs to the alphaherpesvirinae HHV-1 UL4 family.

The protein resides in the host nucleus. This is Nuclear protein UL4 homolog from Varicella-zoster virus (strain Oka vaccine) (HHV-3).